Reading from the N-terminus, the 390-residue chain is 5-hydroxytryptamine receptor 1B (390 aa).

A disordered region spans residues 1–21 (MEETGAQCAPPPPAGSQTGVS). The Extracellular portion of the chain corresponds to 1–46 (MEETGAQCAPPPPAGSQTGVSQVNLSAAPSHNCSTEGYVYQDSVAL). 2 N-linked (GlcNAc...) asparagine glycosylation sites follow: Asn24 and Asn32. The helical transmembrane segment at 47 to 72 (PWKVLLVVLLALITLATTLSNAFVIA) threads the bilayer. Over 73–86 (TVYRTRKLHTPANY) the chain is Cytoplasmic. A helical membrane pass occupies residues 87–111 (LIASLAVTDLLVSILVMPISTMYVV). The Extracellular segment spans residues 112 to 119 (TGRWTLGQ). The helical transmembrane segment at 120 to 145 (VVCDFWLSSDITCCTASILHLCVIAL) threads the bilayer. Residues Cys122 and Cys199 are joined by a disulfide bond. Residues Asp129 and Thr134 each contribute to the ergotamine site. The short motif at 146–148 (DRY) is the DRY motif; important for ligand-induced conformation changes and signaling element. Over 146–165 (DRYWAITDAVEYSAKRTPKR) the chain is Cytoplasmic. The helical transmembrane segment at 166–184 (AAVMIALVWVFSISISLPP) threads the bilayer. Topologically, residues 185–205 (FFWRQAKAEEEVLDCLVNTDH) are extracellular. Val201 contacts ergotamine. A helical transmembrane segment spans residues 206-229 (ILYTVYSTVGAFYFPTLLLIALYS). The Cytoplasmic segment spans residues 230–315 (RIYVEARSRI…AARERKATKT (86 aa)). The tract at residues 251–282 (LTRAQLMTDSPGSTSSVTSINSRAPDVPSESG) is disordered. The span at 255-272 (QLMTDSPGSTSSVTSINS) shows a compositional bias: polar residues. The chain crosses the membrane as a helical span at residues 316–337 (LGIILGAFIVCWLPFFIISLVM). The Extracellular segment spans residues 338–347 (PICKDACWFH). Residues 348–370 (LAIFDFFTWLGYLNSLINPIIYT) traverse the membrane as a helical segment. The NPxxY motif; important for ligand-induced conformation changes and signaling signature appears at 365–369 (NPIIY). Residues 371-390 (MSNEDFKQAFHKLIRFKCAS) are Cytoplasmic-facing. Cys388 is lipidated: S-palmitoyl cysteine.

Belongs to the G-protein coupled receptor 1 family. In terms of assembly, homodimer. Heterodimer with HTR1D. In terms of processing, phosphorylated. Desensitization of the receptor may be mediated by its phosphorylation. Post-translationally, palmitoylated.

It is found in the cell membrane. Functionally, G-protein coupled receptor for 5-hydroxytryptamine (serotonin). Also functions as a receptor for ergot alkaloid derivatives, various anxiolytic and antidepressant drugs and other psychoactive substances, such as lysergic acid diethylamide (LSD). Ligand binding causes a conformation change that triggers signaling via guanine nucleotide-binding proteins (G proteins) and modulates the activity of downstream effectors, such as adenylate cyclase. HTR1B is coupled to G(i)/G(o) G alpha proteins and mediates inhibitory neurotransmission by inhibiting adenylate cyclase activity. Arrestin family members inhibit signaling via G proteins and mediate activation of alternative signaling pathways. Regulates the release of 5-hydroxytryptamine, dopamine and acetylcholine in the brain, and thereby affects neural activity, nociceptive processing, pain perception, mood and behavior. Besides, plays a role in vasoconstriction of cerebral arteries. This is 5-hydroxytryptamine receptor 1B (HTR1B) from Equus caballus (Horse).